Here is a 90-residue protein sequence, read N- to C-terminus: Small ribosomal subunit protein uS15c (90 aa).

The protein belongs to the universal ribosomal protein uS15 family. As to quaternary structure, part of the 30S ribosomal subunit.

It localises to the plastid. The protein localises to the chloroplast. The protein is Small ribosomal subunit protein uS15c (rps15-A) of Zea mays (Maize).